The primary structure comprises 100 residues: Urease subunit gamma (100 aa).

Belongs to the urease gamma subunit family. In terms of assembly, heterotrimer of UreA (gamma), UreB (beta) and UreC (alpha) subunits. Three heterotrimers associate to form the active enzyme.

It is found in the cytoplasm. The enzyme catalyses urea + 2 H2O + H(+) = hydrogencarbonate + 2 NH4(+). The protein operates within nitrogen metabolism; urea degradation; CO(2) and NH(3) from urea (urease route): step 1/1. The sequence is that of Urease subunit gamma from Delftia acidovorans (strain DSM 14801 / SPH-1).